Reading from the N-terminus, the 473-residue chain is UDP-N-acetylmuramoylalanine--D-glutamate ligase (473 aa).

Residue 120-126 (GSNGKTT) coordinates ATP.

The protein belongs to the MurCDEF family.

It is found in the cytoplasm. It catalyses the reaction UDP-N-acetyl-alpha-D-muramoyl-L-alanine + D-glutamate + ATP = UDP-N-acetyl-alpha-D-muramoyl-L-alanyl-D-glutamate + ADP + phosphate + H(+). It functions in the pathway cell wall biogenesis; peptidoglycan biosynthesis. Functionally, cell wall formation. Catalyzes the addition of glutamate to the nucleotide precursor UDP-N-acetylmuramoyl-L-alanine (UMA). The polypeptide is UDP-N-acetylmuramoylalanine--D-glutamate ligase (Nitrosospira multiformis (strain ATCC 25196 / NCIMB 11849 / C 71)).